The following is a 612-amino-acid chain: Dihydroxy-acid dehydratase (612 aa).

Asp-81 lines the Mg(2+) pocket. Cys-122 contacts [2Fe-2S] cluster. Residues Asp-123 and Lys-124 each contribute to the Mg(2+) site. The residue at position 124 (Lys-124) is an N6-carboxylysine. Cys-193 provides a ligand contact to [2Fe-2S] cluster. Mg(2+) is bound at residue Glu-489. Ser-515 acts as the Proton acceptor in catalysis.

The protein belongs to the IlvD/Edd family. In terms of assembly, homodimer. [2Fe-2S] cluster is required as a cofactor. Requires Mg(2+) as cofactor.

It catalyses the reaction (2R)-2,3-dihydroxy-3-methylbutanoate = 3-methyl-2-oxobutanoate + H2O. The catalysed reaction is (2R,3R)-2,3-dihydroxy-3-methylpentanoate = (S)-3-methyl-2-oxopentanoate + H2O. The protein operates within amino-acid biosynthesis; L-isoleucine biosynthesis; L-isoleucine from 2-oxobutanoate: step 3/4. It participates in amino-acid biosynthesis; L-valine biosynthesis; L-valine from pyruvate: step 3/4. Its function is as follows. Functions in the biosynthesis of branched-chain amino acids. Catalyzes the dehydration of (2R,3R)-2,3-dihydroxy-3-methylpentanoate (2,3-dihydroxy-3-methylvalerate) into 2-oxo-3-methylpentanoate (2-oxo-3-methylvalerate) and of (2R)-2,3-dihydroxy-3-methylbutanoate (2,3-dihydroxyisovalerate) into 2-oxo-3-methylbutanoate (2-oxoisovalerate), the penultimate precursor to L-isoleucine and L-valine, respectively. The polypeptide is Dihydroxy-acid dehydratase (Azotobacter vinelandii (strain DJ / ATCC BAA-1303)).